The primary structure comprises 66 residues: Small ribosomal subunit protein bS21 (66 aa).

Positions 47-66 (KAQEAARRKRKFARKRMYED) are disordered. Residues 53–66 (RRKRKFARKRMYED) are compositionally biased toward basic residues.

This sequence belongs to the bacterial ribosomal protein bS21 family.

In Rickettsia bellii (strain RML369-C), this protein is Small ribosomal subunit protein bS21.